The primary structure comprises 184 residues: Myeloproliferative leukemia protein (184 aa).

Positions Trp26–Ser30 match the WSXWS motif motif. Residues Ile44–Leu64 form a helical membrane-spanning segment. The short motif at Leu80 to His88 is the Box 1 motif element.

It belongs to the type I cytokine receptor family. Type 1 subfamily.

It is found in the membrane. In terms of biological role, truncated form of the receptor for thrombopoietin. In Mus musculus (Mouse), this protein is Myeloproliferative leukemia protein (V-MPL).